The primary structure comprises 430 residues: Serine--tRNA ligase (430 aa).

237–239 lines the L-serine pocket; the sequence is TAE. 268-270 serves as a coordination point for ATP; sequence RSE. Glu291 contributes to the L-serine binding site. 355–358 is a binding site for ATP; sequence EISS. Ser391 contributes to the L-serine binding site.

This sequence belongs to the class-II aminoacyl-tRNA synthetase family. Type-1 seryl-tRNA synthetase subfamily. As to quaternary structure, homodimer. The tRNA molecule binds across the dimer.

The protein resides in the cytoplasm. The enzyme catalyses tRNA(Ser) + L-serine + ATP = L-seryl-tRNA(Ser) + AMP + diphosphate + H(+). It carries out the reaction tRNA(Sec) + L-serine + ATP = L-seryl-tRNA(Sec) + AMP + diphosphate + H(+). Its pathway is aminoacyl-tRNA biosynthesis; selenocysteinyl-tRNA(Sec) biosynthesis; L-seryl-tRNA(Sec) from L-serine and tRNA(Sec): step 1/1. Its function is as follows. Catalyzes the attachment of serine to tRNA(Ser). Is also able to aminoacylate tRNA(Sec) with serine, to form the misacylated tRNA L-seryl-tRNA(Sec), which will be further converted into selenocysteinyl-tRNA(Sec). The protein is Serine--tRNA ligase of Shigella dysenteriae serotype 1 (strain Sd197).